The sequence spans 261 residues: Thiazole synthase (261 aa).

Catalysis depends on Lys-102, which acts as the Schiff-base intermediate with DXP. Residues Gly-163, 189-190, and 211-212 contribute to the 1-deoxy-D-xylulose 5-phosphate site; these read AG and NT.

The protein belongs to the ThiG family. In terms of assembly, homotetramer. Forms heterodimers with either ThiH or ThiS.

The protein localises to the cytoplasm. It carries out the reaction [ThiS sulfur-carrier protein]-C-terminal-Gly-aminoethanethioate + 2-iminoacetate + 1-deoxy-D-xylulose 5-phosphate = [ThiS sulfur-carrier protein]-C-terminal Gly-Gly + 2-[(2R,5Z)-2-carboxy-4-methylthiazol-5(2H)-ylidene]ethyl phosphate + 2 H2O + H(+). Its pathway is cofactor biosynthesis; thiamine diphosphate biosynthesis. Catalyzes the rearrangement of 1-deoxy-D-xylulose 5-phosphate (DXP) to produce the thiazole phosphate moiety of thiamine. Sulfur is provided by the thiocarboxylate moiety of the carrier protein ThiS. In vitro, sulfur can be provided by H(2)S. This chain is Thiazole synthase, found in Myxococcus xanthus (strain DK1622).